A 91-amino-acid chain; its full sequence is Essential MCU regulator, mitochondrial (91 aa).

A helical membrane pass occupies residues 45-65; sequence VIPFGLLGVVLTVIPGLLIGA.

The protein belongs to the SMDT1/EMRE family.

The protein resides in the mitochondrion inner membrane. Its function is as follows. Essential regulatory subunit of the mitochondrial calcium uniporter (mcu) channel, a protein that mediates calcium uptake into mitochondria. The sequence is that of Essential MCU regulator, mitochondrial from Aedes aegypti (Yellowfever mosquito).